The sequence spans 156 residues: Large ribosomal subunit protein uL22 (156 aa).

It belongs to the universal ribosomal protein uL22 family. Part of the 50S ribosomal subunit.

In terms of biological role, this protein binds specifically to 23S rRNA. It makes multiple contacts with different domains of the 23S rRNA in the assembled 50S subunit and ribosome. Functionally, the globular domain of the protein is located near the polypeptide exit tunnel on the outside of the subunit, while an extended beta-hairpin is found that lines the wall of the exit tunnel in the center of the 70S ribosome. This chain is Large ribosomal subunit protein uL22, found in Sulfurisphaera tokodaii (strain DSM 16993 / JCM 10545 / NBRC 100140 / 7) (Sulfolobus tokodaii).